The following is a 268-amino-acid chain: GTP cyclohydrolase FolE2 (268 aa).

It belongs to the GTP cyclohydrolase IV family.

The enzyme catalyses GTP + H2O = 7,8-dihydroneopterin 3'-triphosphate + formate + H(+). It participates in cofactor biosynthesis; 7,8-dihydroneopterin triphosphate biosynthesis; 7,8-dihydroneopterin triphosphate from GTP: step 1/1. Functionally, converts GTP to 7,8-dihydroneopterin triphosphate. This Methylococcus capsulatus (strain ATCC 33009 / NCIMB 11132 / Bath) protein is GTP cyclohydrolase FolE2.